A 71-amino-acid polypeptide reads, in one-letter code: General transcription and DNA repair factor IIH subunit TFB5 (71 aa).

Belongs to the TFB5 family. In terms of assembly, component of the 7-subunit TFIIH core complex.

The protein resides in the nucleus. Its subcellular location is the chromosome. Component of the general transcription and DNA repair factor IIH (TFIIH) core complex, which is involved in general and transcription-coupled nucleotide excision repair (NER) of damaged DNA and in RNA transcription by RNA polymerase II. In NER, TFIIH acts by opening DNA around the lesion to allow the excision of the damaged oligonucleotide and its replacement by a new DNA fragment. In transcription, TFIIH has an essential role in transcription initiation. When the pre-initiation complex (PIC) has been established, TFIIH is required for promoter opening and promoter escape. Necessary for the stability of the TFIIH complex and for the presence of normal levels of TFIIH in the cell. Required for efficient binding of TFIIH to damaged DNA. Dispensable for normal development, but required when transcription is challenged. The protein is General transcription and DNA repair factor IIH subunit TFB5 of Caenorhabditis elegans.